We begin with the raw amino-acid sequence, 197 residues long: Holliday junction branch migration complex subunit RuvA (197 aa).

The tract at residues 1–64 is domain I; the sequence is MIASVRGTLI…EDALTLYGFK (64 aa). The domain II stretch occupies residues 65–145; sequence TVEQRQLFET…GLPVAPGVSP (81 aa). The flexible linker stretch occupies residues 146 to 153; it reads AVAAVNAE. Residues 153–197 are domain III; it reads ELSEMLVSLGFSSAEASTAIAALPPDAPLDLEERLRLALRYFGAR.

This sequence belongs to the RuvA family. Homotetramer. Forms an RuvA(8)-RuvB(12)-Holliday junction (HJ) complex. HJ DNA is sandwiched between 2 RuvA tetramers; dsDNA enters through RuvA and exits via RuvB. An RuvB hexamer assembles on each DNA strand where it exits the tetramer. Each RuvB hexamer is contacted by two RuvA subunits (via domain III) on 2 adjacent RuvB subunits; this complex drives branch migration. In the full resolvosome a probable DNA-RuvA(4)-RuvB(12)-RuvC(2) complex forms which resolves the HJ.

Its subcellular location is the cytoplasm. The RuvA-RuvB-RuvC complex processes Holliday junction (HJ) DNA during genetic recombination and DNA repair, while the RuvA-RuvB complex plays an important role in the rescue of blocked DNA replication forks via replication fork reversal (RFR). RuvA specifically binds to HJ cruciform DNA, conferring on it an open structure. The RuvB hexamer acts as an ATP-dependent pump, pulling dsDNA into and through the RuvAB complex. HJ branch migration allows RuvC to scan DNA until it finds its consensus sequence, where it cleaves and resolves the cruciform DNA. The chain is Holliday junction branch migration complex subunit RuvA from Roseiflexus castenholzii (strain DSM 13941 / HLO8).